We begin with the raw amino-acid sequence, 648 residues long: NADP-dependent malic enzyme, chloroplastic (648 aa).

A chloroplast-targeting transit peptide spans 1-61 (MISLNSSFLE…VDSAVRDVNA (61 aa)). Tyr-195 serves as the catalytic Proton donor. Residue Arg-248 coordinates NAD(+). Catalysis depends on Lys-266, which acts as the Proton acceptor. Positions 339, 340, and 363 each coordinate a divalent metal cation. Residue Asp-363 participates in NAD(+) binding. 392–408 (LFLGAGEAGTGIAELIA) lines the NADP(+) pocket. An NAD(+)-binding site is contributed by Asn-504.

Belongs to the malic enzymes family. As to quaternary structure, homotetramer. Requires Mg(2+) as cofactor. It depends on Mn(2+) as a cofactor.

It localises to the plastid. The protein localises to the chloroplast. It catalyses the reaction (S)-malate + NADP(+) = pyruvate + CO2 + NADPH. The catalysed reaction is oxaloacetate + H(+) = pyruvate + CO2. It functions in the pathway photosynthesis; C4 acid pathway. The chloroplastic ME isoform decarboxylates malate shuttled from neighboring mesophyll cells. The CO(2) released is then refixed by ribulose-bisphosphate carboxylase. This pathway eliminates the photorespiratory loss of CO(2) that occurs in most plants. The protein is NADP-dependent malic enzyme, chloroplastic (MOD1) of Flaveria trinervia (Clustered yellowtops).